Consider the following 450-residue polypeptide: UDP-N-acetylmuramoylalanine--D-glutamate ligase (450 aa).

119–125 (GSNGKTT) serves as a coordination point for ATP.

It belongs to the MurCDEF family.

The protein resides in the cytoplasm. The catalysed reaction is UDP-N-acetyl-alpha-D-muramoyl-L-alanine + D-glutamate + ATP = UDP-N-acetyl-alpha-D-muramoyl-L-alanyl-D-glutamate + ADP + phosphate + H(+). Its pathway is cell wall biogenesis; peptidoglycan biosynthesis. Cell wall formation. Catalyzes the addition of glutamate to the nucleotide precursor UDP-N-acetylmuramoyl-L-alanine (UMA). This Bacillus cereus (strain ATCC 14579 / DSM 31 / CCUG 7414 / JCM 2152 / NBRC 15305 / NCIMB 9373 / NCTC 2599 / NRRL B-3711) protein is UDP-N-acetylmuramoylalanine--D-glutamate ligase.